The sequence spans 143 residues: Ribonuclease H (143 aa).

In terms of domain architecture, RNase H type-1 spans methionine 1–glutamate 140. Aspartate 8, glutamate 46, aspartate 68, and aspartate 132 together coordinate Mg(2+).

Belongs to the RNase H family. In terms of assembly, monomer. The cofactor is Mg(2+).

The protein localises to the cytoplasm. The enzyme catalyses Endonucleolytic cleavage to 5'-phosphomonoester.. Functionally, endonuclease that specifically degrades the RNA of RNA-DNA hybrids. The protein is Ribonuclease H of Legionella pneumophila (strain Lens).